The primary structure comprises 323 residues: Transaldolase (323 aa).

Lys-133 (schiff-base intermediate with substrate) is an active-site residue.

Belongs to the transaldolase family. Type 1 subfamily. In terms of assembly, monomer.

The catalysed reaction is D-sedoheptulose 7-phosphate + D-glyceraldehyde 3-phosphate = D-erythrose 4-phosphate + beta-D-fructose 6-phosphate. The protein operates within carbohydrate degradation; pentose phosphate pathway; D-glyceraldehyde 3-phosphate and beta-D-fructose 6-phosphate from D-ribose 5-phosphate and D-xylulose 5-phosphate (non-oxidative stage): step 2/3. Its function is as follows. Transaldolase important for the balance of metabolites in the pentose-phosphate pathway. Involved in xylose fermentation to ethanol. This Fusarium oxysporum f. sp. lycopersici (strain 4287 / CBS 123668 / FGSC 9935 / NRRL 34936) (Fusarium vascular wilt of tomato) protein is Transaldolase.